A 580-amino-acid chain; its full sequence is Dihydroxy-acid dehydratase (580 aa).

The tract at residues 1-31 (MPSGSSESPADALRASDSTPDIKPRSRDVTD) is disordered. The segment covering 20-31 (PDIKPRSRDVTD) has biased composition (basic and acidic residues). Residue Cys-69 coordinates [2Fe-2S] cluster. Asp-101 provides a ligand contact to Mg(2+). Cys-142 is a [2Fe-2S] cluster binding site. Positions 143 and 144 each coordinate Mg(2+). Lys-144 carries the N6-carboxylysine modification. A [2Fe-2S] cluster-binding site is contributed by Cys-219. Residue Glu-470 participates in Mg(2+) binding. Catalysis depends on Ser-496, which acts as the Proton acceptor.

Belongs to the IlvD/Edd family. Homodimer. The cofactor is [2Fe-2S] cluster. Mg(2+) is required as a cofactor.

The catalysed reaction is (2R)-2,3-dihydroxy-3-methylbutanoate = 3-methyl-2-oxobutanoate + H2O. The enzyme catalyses (2R,3R)-2,3-dihydroxy-3-methylpentanoate = (S)-3-methyl-2-oxopentanoate + H2O. The protein operates within amino-acid biosynthesis; L-isoleucine biosynthesis; L-isoleucine from 2-oxobutanoate: step 3/4. Its pathway is amino-acid biosynthesis; L-valine biosynthesis; L-valine from pyruvate: step 3/4. Functions in the biosynthesis of branched-chain amino acids. Catalyzes the dehydration of (2R,3R)-2,3-dihydroxy-3-methylpentanoate (2,3-dihydroxy-3-methylvalerate) into 2-oxo-3-methylpentanoate (2-oxo-3-methylvalerate) and of (2R)-2,3-dihydroxy-3-methylbutanoate (2,3-dihydroxyisovalerate) into 2-oxo-3-methylbutanoate (2-oxoisovalerate), the penultimate precursor to L-isoleucine and L-valine, respectively. The sequence is that of Dihydroxy-acid dehydratase from Mycobacterium sp. (strain JLS).